We begin with the raw amino-acid sequence, 59 residues long: Small, acid-soluble spore protein H 2 (59 aa).

This sequence belongs to the SspH family.

Its subcellular location is the spore core. This Bacillus cereus (strain ATCC 14579 / DSM 31 / CCUG 7414 / JCM 2152 / NBRC 15305 / NCIMB 9373 / NCTC 2599 / NRRL B-3711) protein is Small, acid-soluble spore protein H 2 (sspH2).